The chain runs to 680 residues: Pescadillo homolog (680 aa).

A disordered region spans residues leucine 310 to aspartate 330. In terms of domain architecture, BRCT spans glutamine 351 to proline 470. The disordered stretch occupies residues alanine 472 to lysine 680. The stretch at alanine 496–lysine 523 forms a coiled coil. Acidic residues predominate over residues glutamate 497–alanine 518. Basic and acidic residues predominate over residues aspartate 519–glutamate 529. Composition is skewed to acidic residues over residues alanine 530–valine 543 and glycine 551–glutamate 585. Basic and acidic residues predominate over residues valine 586–glutamate 596. A coiled-coil region spans residues alanine 613–lysine 680. The span at lysine 616–lysine 628 shows a compositional bias: basic residues. Over residues arginine 629 to lysine 639 the composition is skewed to basic and acidic residues.

Belongs to the pescadillo family. Component of the NOP7 complex, composed of erb1, nop7 and ytm1. The complex is held together by erb1, which interacts with nop7 via its N-terminal domain and with ytm1 via a high-affinity interaction between the seven-bladed beta-propeller domains of the 2 proteins. The NOP7 complex associates with the 66S pre-ribosome.

The protein resides in the nucleus. Its subcellular location is the nucleolus. It is found in the nucleoplasm. Component of the NOP7 complex, which is required for maturation of the 25S and 5.8S ribosomal RNAs and formation of the 60S ribosome. This is Pescadillo homolog (nop7) from Aspergillus clavatus (strain ATCC 1007 / CBS 513.65 / DSM 816 / NCTC 3887 / NRRL 1 / QM 1276 / 107).